The sequence spans 82 residues: Small ribosomal subunit protein bS16 (82 aa).

Belongs to the bacterial ribosomal protein bS16 family.

This Synechocystis sp. (strain ATCC 27184 / PCC 6803 / Kazusa) protein is Small ribosomal subunit protein bS16.